Here is a 227-residue protein sequence, read N- to C-terminus: Endonuclease V (227 aa).

Mg(2+) contacts are provided by Asp-46 and Asp-114.

This sequence belongs to the endonuclease V family. Mg(2+) is required as a cofactor.

It localises to the cytoplasm. The catalysed reaction is Endonucleolytic cleavage at apurinic or apyrimidinic sites to products with a 5'-phosphate.. Functionally, DNA repair enzyme involved in the repair of deaminated bases. Selectively cleaves double-stranded DNA at the second phosphodiester bond 3' to a deoxyinosine leaving behind the intact lesion on the nicked DNA. The sequence is that of Endonuclease V from Alkalilimnicola ehrlichii (strain ATCC BAA-1101 / DSM 17681 / MLHE-1).